The primary structure comprises 86 residues: Large ribosomal subunit protein uL23 (86 aa).

The protein belongs to the universal ribosomal protein uL23 family. As to quaternary structure, part of the 50S ribosomal subunit. Contacts protein L29.

Its function is as follows. Binds to 23S rRNA. One of the proteins that surrounds the polypeptide exit tunnel on the outside of the ribosome. This chain is Large ribosomal subunit protein uL23, found in Aeropyrum pernix (strain ATCC 700893 / DSM 11879 / JCM 9820 / NBRC 100138 / K1).